A 174-amino-acid polypeptide reads, in one-letter code: Repair DNA polymerase X (174 aa).

The interval 42–51 (REEKMLNDVD) is involved in ssDNA binding. 2 residues coordinate Mg(2+): D49 and D51. C81 and C86 are disulfide-bonded. D100 serves as a coordination point for Mg(2+).

It belongs to the DNA polymerase type-X family. Mg(2+) is required as a cofactor.

It localises to the virion. The enzyme catalyses DNA(n) + a 2'-deoxyribonucleoside 5'-triphosphate = DNA(n+1) + diphosphate. Its function is as follows. Error-prone polymerase lacking a proofreading 3'-5' exonuclease which catalyzes the gap-filling reaction during the DNA repair process. Specifically binds intermediates in the single-nucleotide base-excision repair process. Also catalyzes DNA polymerization with low nucleotide-insertion fidelity. Probably acts as a strategic DNA mutase, which gives rise to a rapid emergence of variants. Generates mismatched G-G pairs, in that case, the polymerase first binds the deoxynucleotide followed by mismatch formation. Together with the viral DNA ligase, fills the single nucleotide gaps generated by the AP endonuclease. Binds DNA with high affinity via the helix alphaE. The protein is Repair DNA polymerase X of Ornithodoros (relapsing fever ticks).